Reading from the N-terminus, the 563-residue chain is Putative inactive polypeptide N-acetylgalactosaminyltransferase 12 (563 aa).

The Cytoplasmic segment spans residues 1 to 6 (MEVFAS). A helical; Signal-anchor for type II membrane protein transmembrane segment spans residues 7 to 29 (VLNCCFKYIVLPVWIFIVLLLLH). The Lumenal segment spans residues 30-563 (RDLSSWDGLM…SVMQSANILV (534 aa)). The N-linked (GlcNAc...) asparagine glycan is linked to Asn50. A disulfide bond links Cys97 and Cys334. A catalytic subdomain A region spans residues 109-225 (MKPASIIMIF…NGWLSPLLDT (117 aa)). The tract at residues 280-342 (PYEVAAVRTS…PCSRVGHLQP (63 aa)) is catalytic subdomain B. N-linked (GlcNAc...) asparagine glycans are attached at residues Asn389 and Asn428. Positions 433 to 549 (ASGHVKTLEF…ANGKQRWILD (117 aa)) constitute a Ricin B-type lectin domain. A disulfide bond links Cys446 and Cys461. Asn464 and Asn469 each carry an N-linked (GlcNAc...) asparagine glycan. Intrachain disulfides connect Cys485-Cys499 and Cys523-Cys537. N-linked (GlcNAc...) asparagine glycosylation occurs at Asn552.

This sequence belongs to the glycosyltransferase 2 family. GalNAc-T subfamily.

The protein resides in the golgi apparatus membrane. Functionally, probable inactive glycosyltransferase. The sequence is that of Putative inactive polypeptide N-acetylgalactosaminyltransferase 12 (pgant12) from Drosophila melanogaster (Fruit fly).